The following is a 647-amino-acid chain: Threonine--tRNA ligase (647 aa).

Residues 1–61 (MIKITFPDGA…EEDGSIEIVT (61 aa)) enclose the TGS domain. The segment at 240 to 538 (DHRKLGKELD…LIETYKGAFP (299 aa)) is catalytic. The Zn(2+) site is built by cysteine 334, histidine 385, and histidine 515.

It belongs to the class-II aminoacyl-tRNA synthetase family. In terms of assembly, homodimer. Zn(2+) is required as a cofactor.

Its subcellular location is the cytoplasm. It catalyses the reaction tRNA(Thr) + L-threonine + ATP = L-threonyl-tRNA(Thr) + AMP + diphosphate + H(+). Catalyzes the attachment of threonine to tRNA(Thr) in a two-step reaction: L-threonine is first activated by ATP to form Thr-AMP and then transferred to the acceptor end of tRNA(Thr). Also edits incorrectly charged L-seryl-tRNA(Thr). This Streptococcus pyogenes serotype M18 (strain MGAS8232) protein is Threonine--tRNA ligase.